The primary structure comprises 587 residues: Chaperonin CPN60, mitochondrial (587 aa).

The N-terminal 32 residues, 1–32 (MYRLISSIASKARVARNCTSQIGSRLSSTRNY), are a transit peptide targeting the mitochondrion.

Belongs to the chaperonin (HSP60) family.

The protein resides in the mitochondrion. In terms of biological role, implicated in mitochondrial protein import and macromolecular assembly. May facilitate the correct folding of imported proteins. May also prevent misfolding and promote the refolding and proper assembly of unfolded polypeptides generated under stress conditions in the mitochondrial matrix. This is Chaperonin CPN60, mitochondrial from Brassica napus (Rape).